The sequence spans 668 residues: tRNA 5-methylaminomethyl-2-thiouridine biosynthesis bifunctional protein MnmC (668 aa).

The tract at residues 1–245 (MKHYSIQPAN…KREMLCGVME (245 aa)) is tRNA (mnm(5)s(2)U34)-methyltransferase. Residues 270–668 (IGGGIASALL…LLKGKAVKAG (399 aa)) are FAD-dependent cmnm(5)s(2)U34 oxidoreductase.

The protein in the N-terminal section; belongs to the methyltransferase superfamily. tRNA (mnm(5)s(2)U34)-methyltransferase family. This sequence in the C-terminal section; belongs to the DAO family. FAD serves as cofactor.

The protein resides in the cytoplasm. The catalysed reaction is 5-aminomethyl-2-thiouridine(34) in tRNA + S-adenosyl-L-methionine = 5-methylaminomethyl-2-thiouridine(34) in tRNA + S-adenosyl-L-homocysteine + H(+). Catalyzes the last two steps in the biosynthesis of 5-methylaminomethyl-2-thiouridine (mnm(5)s(2)U) at the wobble position (U34) in tRNA. Catalyzes the FAD-dependent demodification of cmnm(5)s(2)U34 to nm(5)s(2)U34, followed by the transfer of a methyl group from S-adenosyl-L-methionine to nm(5)s(2)U34, to form mnm(5)s(2)U34. This chain is tRNA 5-methylaminomethyl-2-thiouridine biosynthesis bifunctional protein MnmC, found in Shigella dysenteriae serotype 1 (strain Sd197).